The chain runs to 378 residues: GTP cyclohydrolase-2 (378 aa).

A DHBP synthase-like region spans residues 1 to 180 (MEEVSSHVKS…IKDMIEFRIK (180 aa)). A GTP cyclohydrolase II region spans residues 181–378 (SEKIVERVIE…KMGHLICFND (198 aa)). GTP is bound at residue 229 to 233 (RIHSE). The Zn(2+) site is built by cysteine 234, cysteine 245, and cysteine 247. Residues glutamine 250, 273-275 (EGR), and threonine 295 contribute to the GTP site. The Proton acceptor role is filled by aspartate 307. Catalysis depends on arginine 309, which acts as the Nucleophile. Threonine 330 and lysine 335 together coordinate GTP.

The protein in the N-terminal section; belongs to the DHBP synthase family. It in the C-terminal section; belongs to the GTP cyclohydrolase II family. It depends on Zn(2+) as a cofactor.

It catalyses the reaction GTP + 4 H2O = 2,5-diamino-6-hydroxy-4-(5-phosphoribosylamino)-pyrimidine + formate + 2 phosphate + 3 H(+). It functions in the pathway cofactor biosynthesis; riboflavin biosynthesis; 5-amino-6-(D-ribitylamino)uracil from GTP: step 1/4. Its function is as follows. Catalyzes the conversion of GTP to 2,5-diamino-6-ribosylamino-4(3H)-pyrimidinone 5'-phosphate (DARP), formate and pyrophosphate. The sequence is that of GTP cyclohydrolase-2 (ribA) from Archaeoglobus fulgidus (strain ATCC 49558 / DSM 4304 / JCM 9628 / NBRC 100126 / VC-16).